The chain runs to 347 residues: NADH-ubiquinone oxidoreductase chain 2 (347 aa).

11 consecutive transmembrane segments (helical) span residues 2–22 (SPYVLTIMSLSLLLGTTMTLI), 25–45 (HWLTAWMGLEINTLAVIPLMT), 56–76 (AIKYFMIQATASMIILFSAIF), 96–116 (FMMTIALAMKLGLAPFHFWVP), 122–142 (IPLLSGMILLTWQKIAPISIF), 149–169 (LNMSLLMILSITSTLLGGWGG), 178–197 (ILAYSSIAHMGWMTIIIMIY), 202–219 (ILNLILYLASTITMFMVL), 241–261 (MIIITLTLLSLGGLPPLTGFM), 278–298 (LAMMLALSTLLNLFFYMRIIY), and 323–343 (ILPIPTLTIISSLLLPMTPMF).

This sequence belongs to the complex I subunit 2 family. Core subunit of respiratory chain NADH dehydrogenase (Complex I) which is composed of 45 different subunits. Interacts with TMEM242.

The protein localises to the mitochondrion inner membrane. The enzyme catalyses a ubiquinone + NADH + 5 H(+)(in) = a ubiquinol + NAD(+) + 4 H(+)(out). Core subunit of the mitochondrial membrane respiratory chain NADH dehydrogenase (Complex I) which catalyzes electron transfer from NADH through the respiratory chain, using ubiquinone as an electron acceptor. Essential for the catalytic activity and assembly of complex I. The sequence is that of NADH-ubiquinone oxidoreductase chain 2 from Metachirus nudicaudatus (Brown four-eyed opossum).